Reading from the N-terminus, the 351-residue chain is tRNA uridine(34) hydroxylase (351 aa).

Positions 146–240 (DDPQALFVDM…YARRAREQGL (95 aa)) constitute a Rhodanese domain. Cys200 serves as the catalytic Cysteine persulfide intermediate.

It belongs to the TrhO family.

The enzyme catalyses uridine(34) in tRNA + AH2 + O2 = 5-hydroxyuridine(34) in tRNA + A + H2O. Its function is as follows. Catalyzes oxygen-dependent 5-hydroxyuridine (ho5U) modification at position 34 in tRNAs. This is tRNA uridine(34) hydroxylase from Sodalis glossinidius (strain morsitans).